We begin with the raw amino-acid sequence, 180 residues long: Protein GrpE (180 aa).

A disordered region spans residues 1–25; it reads MSKKKAEDKQPIIKDEAVEEPKSDS.

This sequence belongs to the GrpE family. As to quaternary structure, homodimer.

It is found in the cytoplasm. Its function is as follows. Participates actively in the response to hyperosmotic and heat shock by preventing the aggregation of stress-denatured proteins, in association with DnaK and GrpE. It is the nucleotide exchange factor for DnaK and may function as a thermosensor. Unfolded proteins bind initially to DnaJ; upon interaction with the DnaJ-bound protein, DnaK hydrolyzes its bound ATP, resulting in the formation of a stable complex. GrpE releases ADP from DnaK; ATP binding to DnaK triggers the release of the substrate protein, thus completing the reaction cycle. Several rounds of ATP-dependent interactions between DnaJ, DnaK and GrpE are required for fully efficient folding. The polypeptide is Protein GrpE (Fructilactobacillus sanfranciscensis (Lactobacillus sanfranciscensis)).